A 521-amino-acid chain; its full sequence is DNA damage-binding protein cmr1 (521 aa).

Residues 36–75 (DKIIPKPAPPKPKRASTPRVKREPVKKEAARPTRQSSRLA) are disordered. A compositionally biased stretch (basic and acidic residues) spans 55–66 (VKREPVKKEAAR). WD repeat units lie at residues 183–224 (IVPQ…PKIE), 242–282 (THSR…STEI), 333–373 (LTDH…GKGD), 382–422 (EHES…EWKA), and 490–521 (DGIT…CLWM).

Belongs to the WD repeat DDB2/WDR76 family.

Functionally, DNA-binding protein that binds to both single- and double-stranded DNA. Binds preferentially to UV-damaged DNA. May be involved in DNA-metabolic processes. This chain is DNA damage-binding protein cmr1, found in Neurospora crassa (strain ATCC 24698 / 74-OR23-1A / CBS 708.71 / DSM 1257 / FGSC 987).